Consider the following 194-residue polypeptide: Orotate phosphoribosyltransferase (194 aa).

Residues Arg102, Lys103, Lys106, His108, and 129-137 each bind 5-phospho-alpha-D-ribose 1-diphosphate; that span reads EDVVTTGGS. The orotate site is built by Thr133 and Arg161.

Belongs to the purine/pyrimidine phosphoribosyltransferase family. PyrE subfamily. Homodimer. It depends on Mg(2+) as a cofactor.

The enzyme catalyses orotidine 5'-phosphate + diphosphate = orotate + 5-phospho-alpha-D-ribose 1-diphosphate. It participates in pyrimidine metabolism; UMP biosynthesis via de novo pathway; UMP from orotate: step 1/2. In terms of biological role, catalyzes the transfer of a ribosyl phosphate group from 5-phosphoribose 1-diphosphate to orotate, leading to the formation of orotidine monophosphate (OMP). The sequence is that of Orotate phosphoribosyltransferase from Synechococcus sp. (strain CC9902).